We begin with the raw amino-acid sequence, 688 residues long: Small ribosomal subunit protein mS39 (688 aa).

The N-terminal 37 residues, 1 to 37 (MASVASARWLRVSCGLCVPLTARRAGPCGRTPSSRFY), are a transit peptide targeting the mitochondrion. Residue Lys-126 is modified to N6-acetyllysine. 10 PPR repeats span residues 149-183 (IEEISEAALQERIKLKKVKASVDIFDQLLQAGTTV), 184-219 (SLETTNSLLDLLCYYGNQEPSTNYNFQQHEQTEELE), 258-292 (NAHSYCTMIRGMVKHRAHTQALSMYTELLNNRLRA), 293-333 (DVHT…NVKP), 334-370 (NLQTFNTILKCLRRFYAFGKLPALQTFREMKAIGIEP), 371-412 (SLAT…SPKD), 415-449 (DDMFFQSAMRVCSSLRDLELAYQVHGLLNTGDNRK), 457-491 (RNFYYSKFFSLLCLMEQIDVTLKWYKDLIPSVFFP), 492-526 (HSQTLIDLLQALDVANRLEMIPQIWKDSKEYGHTF), and 575-609 (PANSLNYIAILFLRAGRTQEAWKMLGLFRKHNKIP). Positions 667 to 688 (GDLTALTSDSESDSDSDTSKDK) are disordered.

Belongs to the mitochondrion-specific ribosomal protein mS39 family. Component of the mitochondrial ribosome small subunit (28S) which comprises a 12S rRNA and about 30 distinct proteins. Associated with the 12S mitochondrial rRNA (12S mt-rRNA).

The protein resides in the mitochondrion. Its function is as follows. Mitochondrial RNA-binding protein that has a role in mitochondrial translation. The chain is Small ribosomal subunit protein mS39 (PTCD3) from Bos taurus (Bovine).